The following is a 269-amino-acid chain: 1-(5-phosphoribosyl)-5-[(5-phosphoribosylamino)methylideneamino] imidazole-4-carboxamide isomerase (269 aa).

Residue aspartate 10 is the Proton acceptor of the active site. Aspartate 132 serves as the catalytic Proton donor.

It belongs to the HisA/HisF family.

Its subcellular location is the cytoplasm. It catalyses the reaction 1-(5-phospho-beta-D-ribosyl)-5-[(5-phospho-beta-D-ribosylamino)methylideneamino]imidazole-4-carboxamide = 5-[(5-phospho-1-deoxy-D-ribulos-1-ylimino)methylamino]-1-(5-phospho-beta-D-ribosyl)imidazole-4-carboxamide. Its pathway is amino-acid biosynthesis; L-histidine biosynthesis; L-histidine from 5-phospho-alpha-D-ribose 1-diphosphate: step 4/9. The protein is 1-(5-phosphoribosyl)-5-[(5-phosphoribosylamino)methylideneamino] imidazole-4-carboxamide isomerase of Xylella fastidiosa (strain M12).